Here is a 356-residue protein sequence, read N- to C-terminus: tRNA-specific 2-thiouridylase MnmA (356 aa).

ATP contacts are provided by residues 8 to 15 (GMSGGVDS) and Met-34. Catalysis depends on Cys-103, which acts as the Nucleophile. Residues Cys-103 and Cys-199 are joined by a disulfide bond. Gly-127 is a binding site for ATP. Residues 149–151 (KDQ) form an interaction with tRNA region. Cys-199 acts as the Cysteine persulfide intermediate in catalysis. Residues 305-306 (RY) form an interaction with tRNA region.

Belongs to the MnmA/TRMU family.

Its subcellular location is the cytoplasm. The enzyme catalyses S-sulfanyl-L-cysteinyl-[protein] + uridine(34) in tRNA + AH2 + ATP = 2-thiouridine(34) in tRNA + L-cysteinyl-[protein] + A + AMP + diphosphate + H(+). Its function is as follows. Catalyzes the 2-thiolation of uridine at the wobble position (U34) of tRNA, leading to the formation of s(2)U34. This Clostridium kluyveri (strain ATCC 8527 / DSM 555 / NBRC 12016 / NCIMB 10680 / K1) protein is tRNA-specific 2-thiouridylase MnmA.